Consider the following 350-residue polypeptide: Erythronate-4-phosphate dehydrogenase (350 aa).

Ser45 and Thr66 together coordinate substrate. Residues 124–125 (QV), Asp144, 203–205 (ASR), and Asp226 each bind NAD(+). Arg205 is a catalytic residue. Glu231 is an active-site residue. His248 (proton donor) is an active-site residue. Gly251 lines the NAD(+) pocket.

The protein belongs to the D-isomer specific 2-hydroxyacid dehydrogenase family. PdxB subfamily. In terms of assembly, homodimer.

The protein resides in the cytoplasm. It carries out the reaction 4-phospho-D-erythronate + NAD(+) = (R)-3-hydroxy-2-oxo-4-phosphooxybutanoate + NADH + H(+). It functions in the pathway cofactor biosynthesis; pyridoxine 5'-phosphate biosynthesis; pyridoxine 5'-phosphate from D-erythrose 4-phosphate: step 2/5. Its function is as follows. Catalyzes the oxidation of erythronate-4-phosphate to 3-hydroxy-2-oxo-4-phosphonooxybutanoate. The polypeptide is Erythronate-4-phosphate dehydrogenase (Legionella pneumophila (strain Lens)).